The primary structure comprises 155 residues: Cytochrome c-type biogenesis protein CcmE (155 aa).

At 1–8 (MNPLRKKR) the chain is on the cytoplasmic side. A helical; Signal-anchor for type II membrane protein transmembrane segment spans residues 9-29 (LLIIVALLAGVGLAVTLALSA). Residues 30–155 (LQENINLFYT…AASPTPVKQG (126 aa)) lie on the Periplasmic side of the membrane. Heme contacts are provided by His124 and Tyr128.

Belongs to the CcmE/CycJ family.

Its subcellular location is the cell inner membrane. Functionally, heme chaperone required for the biogenesis of c-type cytochromes. Transiently binds heme delivered by CcmC and transfers the heme to apo-cytochromes in a process facilitated by CcmF and CcmH. This chain is Cytochrome c-type biogenesis protein CcmE, found in Pseudomonas syringae pv. syringae (strain B728a).